The sequence spans 231 residues: Putative N-acetylmannosamine-6-phosphate 2-epimerase (231 aa).

This sequence belongs to the NanE family.

It catalyses the reaction an N-acyl-D-glucosamine 6-phosphate = an N-acyl-D-mannosamine 6-phosphate. It functions in the pathway amino-sugar metabolism; N-acetylneuraminate degradation; D-fructose 6-phosphate from N-acetylneuraminate: step 3/5. In terms of biological role, converts N-acetylmannosamine-6-phosphate (ManNAc-6-P) to N-acetylglucosamine-6-phosphate (GlcNAc-6-P). The protein is Putative N-acetylmannosamine-6-phosphate 2-epimerase of Listeria innocua serovar 6a (strain ATCC BAA-680 / CLIP 11262).